Consider the following 486-residue polypeptide: Probable transporter MCH1 (486 aa).

The next 12 helical transmembrane spans lie at 31–51 (IFAL…FSMY), 68–88 (SVSI…GYLG), 95–115 (YLAL…SGIF), 135–155 (EMAL…YASL), 174–194 (TYTP…SSLW), 211–231 (VAGI…IIFF), 268–288 (FFTD…GGPF), 312–333 (FSTH…VGFS), 349–369 (VIAL…FTVF), 377–397 (VVTI…PTIV), 409–429 (IWGS…LLFA), and 457–477 (FVIT…IWVF).

It belongs to the major facilitator superfamily.

It is found in the vacuole membrane. Functionally, probable transporter. This chain is Probable transporter MCH1 (MCH1), found in Yarrowia lipolytica (strain CLIB 122 / E 150) (Yeast).